The following is a 145-amino-acid chain: Arginine repressor (145 aa).

This sequence belongs to the ArgR family.

The protein localises to the cytoplasm. The protein operates within amino-acid biosynthesis; L-arginine biosynthesis [regulation]. Its function is as follows. Regulates arginine biosynthesis genes. The protein is Arginine repressor of Streptococcus mutans serotype c (strain ATCC 700610 / UA159).